We begin with the raw amino-acid sequence, 301 residues long: MTANLTHLQRLEAESIHIMRGVAANFSKPVMLYSIGKDSSVLLHLAMKAFYPAKPPFPFLHVDTTWKFREMIEFRDRMAAELGFDLLVHINEEGVRDGINPFDHGSNVHTHIMKTVALRQALDKYGFDAAFGGARRDEEKSRAKERVFSFRTASHTWDPKNQRPEMWKIYNTRVAQGESIRVFPLSNWTELDIWQYILQEGIPIVPLYFAKKRPVVNRGGMTIMVDDDRMKLLPGETVEERMVRFRTLGCYPLTGAIDSCAATLEDIVSEMLTARTSERQGRLIDRDEAGSMEKKKREGYF.

Positions 282–301 are disordered; the sequence is RLIDRDEAGSMEKKKREGYF.

Belongs to the PAPS reductase family. CysD subfamily. In terms of assembly, heterodimer composed of CysD, the smaller subunit, and CysN.

The catalysed reaction is sulfate + ATP + H(+) = adenosine 5'-phosphosulfate + diphosphate. The protein operates within sulfur metabolism; hydrogen sulfide biosynthesis; sulfite from sulfate: step 1/3. In terms of biological role, with CysN forms the ATP sulfurylase (ATPS) that catalyzes the adenylation of sulfate producing adenosine 5'-phosphosulfate (APS) and diphosphate, the first enzymatic step in sulfur assimilation pathway. APS synthesis involves the formation of a high-energy phosphoric-sulfuric acid anhydride bond driven by GTP hydrolysis by CysN coupled to ATP hydrolysis by CysD. The protein is Sulfate adenylyltransferase subunit 2 of Chelativorans sp. (strain BNC1).